A 133-amino-acid chain; its full sequence is DNA-directed RNA polymerases I, II, and III subunit rpabc2 (133 aa).

Positions 1 to 32 are enriched in acidic residues; the sequence is MADFEGGGDDGGYEEFDEGGGFEEEYVEETET. A disordered region spans residues 1–55; that stretch reads MADFEGGGDDGGYEEFDEGGGFEEEYVEETETTEAYTDIIDPSADANTAEAGRIP.

It belongs to the archaeal Rpo6/eukaryotic RPB6 RNA polymerase subunit family. As to quaternary structure, component of the RNA polymerase I (Pol I), RNA polymerase II (Pol II) and RNA polymerase III (Pol III) complexes consisting of at least 13, 12 and 17 subunits, respectively.

The protein localises to the nucleus. Its function is as follows. DNA-dependent RNA polymerases catalyze the transcription of DNA into RNA using the four ribonucleoside triphosphates as substrates. Common component of RNA polymerases I, II and III which synthesize ribosomal RNA precursors, mRNA precursors and many functional non-coding RNAs, and small RNAs, such as 5S rRNA and tRNAs, respectively. Pol II is the central component of the basal RNA polymerase II transcription machinery. Pols are composed of mobile elements that move relative to each other. In Pol II, RPB6 is part of the clamp element and together with parts of RPB1 and RPB2 forms a pocket to which the RPB4-RPB7 subcomplex binds. The polypeptide is DNA-directed RNA polymerases I, II, and III subunit rpabc2 (polr2f) (Dictyostelium discoideum (Social amoeba)).